We begin with the raw amino-acid sequence, 263 residues long: Phosphoribosylaminoimidazole-succinocarboxamide synthase (263 aa).

The segment at methionine 239–histidine 263 is disordered.

It belongs to the SAICAR synthetase family.

The catalysed reaction is 5-amino-1-(5-phospho-D-ribosyl)imidazole-4-carboxylate + L-aspartate + ATP = (2S)-2-[5-amino-1-(5-phospho-beta-D-ribosyl)imidazole-4-carboxamido]succinate + ADP + phosphate + 2 H(+). Its pathway is purine metabolism; IMP biosynthesis via de novo pathway; 5-amino-1-(5-phospho-D-ribosyl)imidazole-4-carboxamide from 5-amino-1-(5-phospho-D-ribosyl)imidazole-4-carboxylate: step 1/2. The chain is Phosphoribosylaminoimidazole-succinocarboxamide synthase from Chelativorans sp. (strain BNC1).